A 194-amino-acid chain; its full sequence is Peptidyl-tRNA hydrolase (194 aa).

Residue tyrosine 16 coordinates tRNA. The Proton acceptor role is filled by histidine 21. TRNA-binding residues include phenylalanine 67, asparagine 69, and asparagine 115.

It belongs to the PTH family. In terms of assembly, monomer.

The protein resides in the cytoplasm. The catalysed reaction is an N-acyl-L-alpha-aminoacyl-tRNA + H2O = an N-acyl-L-amino acid + a tRNA + H(+). In terms of biological role, hydrolyzes ribosome-free peptidyl-tRNAs (with 1 or more amino acids incorporated), which drop off the ribosome during protein synthesis, or as a result of ribosome stalling. Catalyzes the release of premature peptidyl moieties from peptidyl-tRNA molecules trapped in stalled 50S ribosomal subunits, and thus maintains levels of free tRNAs and 50S ribosomes. The chain is Peptidyl-tRNA hydrolase from Escherichia coli O81 (strain ED1a).